A 514-amino-acid polypeptide reads, in one-letter code: 2,3-bisphosphoglycerate-independent phosphoglycerate mutase (514 aa).

Residues Asp-14 and Ser-64 each coordinate Mn(2+). Ser-64 functions as the Phosphoserine intermediate in the catalytic mechanism. Residues His-125, 155–156 (RD), Arg-187, Arg-193, 263–266 (RADR), and Lys-336 contribute to the substrate site. Asp-403, His-407, Asp-444, His-445, and His-463 together coordinate Mn(2+).

This sequence belongs to the BPG-independent phosphoglycerate mutase family. In terms of assembly, monomer. Requires Mn(2+) as cofactor.

It carries out the reaction (2R)-2-phosphoglycerate = (2R)-3-phosphoglycerate. It participates in carbohydrate degradation; glycolysis; pyruvate from D-glyceraldehyde 3-phosphate: step 3/5. Functionally, catalyzes the interconversion of 2-phosphoglycerate and 3-phosphoglycerate. The chain is 2,3-bisphosphoglycerate-independent phosphoglycerate mutase from Escherichia coli O6:H1 (strain CFT073 / ATCC 700928 / UPEC).